The following is a 571-amino-acid chain: MDKNEIILMLKNVSTSPGVYLWKDAKQNVLYVGKAKNLRKRMLQYFDGAINSYKTNKLVSLIYDFDVYICKTNKEALLLEKAMIDRYNPEFNILLLDDRKYPYLKVQLLKDSLLINLSRKVNAKDSKNTFYYGPFPSGYGAKPILKLLQHETLYENGLLIKNKDYNFWINQFNKIKEILSFKNNNYINELTNKMHQAANNMQFELALFLRDGLTYLKKLKESQIIELSQYKNIDVFAYKTDEKLIFATVLFYRYGILINKVNLTIPLGLSVDESLRVFFEQFYEDKILPDNLIVQEELLNFDLNLSSEYKFISPKIGTNKKVLDLAILNLNDYYEKEHLVIKNQLDKASNMLDSLNKYLNLPKLKNIVVFDNSNINNINPVGVAIVYTNGIKNKSLYRKFNLEALNERSADVEYIKQSISKFFSSNKNTKDYDLVIADGGIQQVNEAKKTLKTLNINIPVIGLVKNEFHKTKALIDLDMNEIHINDLELYNYLVQIQVEVDRFAKSHFRNRQKISSLEGKLRNIKGLGPNMEQNLLNHFKSYAKIYDASVEELSKIVPLNIAKSIKNKDYE.

Residues 15–93 (TSPGVYLWKD…IDRYNPEFNI (79 aa)) enclose the GIY-YIG domain. Residues 184-219 (NNYINELTNKMHQAANNMQFELALFLRDGLTYLKKL) enclose the UVR domain.

This sequence belongs to the UvrC family. In terms of assembly, interacts with UvrB in an incision complex.

Its subcellular location is the cytoplasm. Its function is as follows. The UvrABC repair system catalyzes the recognition and processing of DNA lesions. UvrC both incises the 5' and 3' sides of the lesion. The N-terminal half is responsible for the 3' incision and the C-terminal half is responsible for the 5' incision. This chain is UvrABC system protein C, found in Mycoplasmopsis bovis (strain ATCC 25523 / DSM 22781 / NCTC 10131 / PG45) (Mycoplasma bovis).